Consider the following 199-residue polypeptide: Recombination protein RecR (199 aa).

The C4-type zinc finger occupies 56-71 (CQVCFHLSAESTCEIC). In terms of domain architecture, Toprim spans 79-173 (QTLCVVADSR…KVTRIAFGLP (95 aa)).

It belongs to the RecR family.

Functionally, may play a role in DNA repair. It seems to be involved in an RecBC-independent recombinational process of DNA repair. It may act with RecF and RecO. The protein is Recombination protein RecR of Gloeothece citriformis (strain PCC 7424) (Cyanothece sp. (strain PCC 7424)).